The sequence spans 503 residues: Maturase K (503 aa).

This sequence belongs to the intron maturase 2 family. MatK subfamily.

It is found in the plastid. The protein localises to the chloroplast. Its function is as follows. Usually encoded in the trnK tRNA gene intron. Probably assists in splicing its own and other chloroplast group II introns. The sequence is that of Maturase K from Rosa californica (California wild rose).